Consider the following 301-residue polypeptide: Ribosomal RNA small subunit methyltransferase H (301 aa).

Residues 35–37, D55, F84, D105, and Q112 contribute to the S-adenosyl-L-methionine site; that span reads GGH.

Belongs to the methyltransferase superfamily. RsmH family.

It localises to the cytoplasm. It carries out the reaction cytidine(1402) in 16S rRNA + S-adenosyl-L-methionine = N(4)-methylcytidine(1402) in 16S rRNA + S-adenosyl-L-homocysteine + H(+). Specifically methylates the N4 position of cytidine in position 1402 (C1402) of 16S rRNA. In Chloroflexus aurantiacus (strain ATCC 29366 / DSM 635 / J-10-fl), this protein is Ribosomal RNA small subunit methyltransferase H.